The primary structure comprises 196 residues: MLEQIKNNFTESIQTQIAASELLGPSIEHAGMMMVQCLLGGNKIISCGNGGSAGHAQHFCAQLLNKYETERPSLPAISLNSDISTITSIANDYQYDEVFSKQIRALGHNGDVLLAISTSGNSRNVVKAIESAVSRDIPIIALTGFDGGDISGLLGEGDVEIRVPSARTSRIQEVHLVVLHSLCEIIDTTLFPQGDS.

In terms of domain architecture, SIS spans 34–192; sequence MVQCLLGGNK…CEIIDTTLFP (159 aa). 49 to 51 contributes to the substrate binding site; that stretch reads NGG. Positions 58 and 62 each coordinate Zn(2+). Substrate-binding positions include glutamine 62, 91-92, 117-119, serine 122, and glutamine 172; these read ND and STS. 2 residues coordinate Zn(2+): glutamine 172 and histidine 180.

The protein belongs to the SIS family. GmhA subfamily. In terms of assembly, homotetramer. Requires Zn(2+) as cofactor.

It localises to the cytoplasm. The enzyme catalyses 2 D-sedoheptulose 7-phosphate = D-glycero-alpha-D-manno-heptose 7-phosphate + D-glycero-beta-D-manno-heptose 7-phosphate. The protein operates within carbohydrate biosynthesis; D-glycero-D-manno-heptose 7-phosphate biosynthesis; D-glycero-alpha-D-manno-heptose 7-phosphate and D-glycero-beta-D-manno-heptose 7-phosphate from sedoheptulose 7-phosphate: step 1/1. Functionally, catalyzes the isomerization of sedoheptulose 7-phosphate in D-glycero-D-manno-heptose 7-phosphate. This Colwellia psychrerythraea (strain 34H / ATCC BAA-681) (Vibrio psychroerythus) protein is Phosphoheptose isomerase.